The chain runs to 352 residues: Histidinol-phosphate aminotransferase (352 aa).

The residue at position 211 (K211) is an N6-(pyridoxal phosphate)lysine.

Belongs to the class-II pyridoxal-phosphate-dependent aminotransferase family. Histidinol-phosphate aminotransferase subfamily. In terms of assembly, homodimer. Requires pyridoxal 5'-phosphate as cofactor.

It catalyses the reaction L-histidinol phosphate + 2-oxoglutarate = 3-(imidazol-4-yl)-2-oxopropyl phosphate + L-glutamate. It participates in amino-acid biosynthesis; L-histidine biosynthesis; L-histidine from 5-phospho-alpha-D-ribose 1-diphosphate: step 7/9. The polypeptide is Histidinol-phosphate aminotransferase (Haemophilus influenzae (strain PittEE)).